A 240-amino-acid polypeptide reads, in one-letter code: Phosphoribosylaminoimidazole-succinocarboxamide synthase (240 aa).

Belongs to the SAICAR synthetase family.

It catalyses the reaction 5-amino-1-(5-phospho-D-ribosyl)imidazole-4-carboxylate + L-aspartate + ATP = (2S)-2-[5-amino-1-(5-phospho-beta-D-ribosyl)imidazole-4-carboxamido]succinate + ADP + phosphate + 2 H(+). Its pathway is purine metabolism; IMP biosynthesis via de novo pathway; 5-amino-1-(5-phospho-D-ribosyl)imidazole-4-carboxamide from 5-amino-1-(5-phospho-D-ribosyl)imidazole-4-carboxylate: step 1/2. In Wigglesworthia glossinidia brevipalpis, this protein is Phosphoribosylaminoimidazole-succinocarboxamide synthase.